The sequence spans 119 residues: ATP-dependent Clp protease adapter protein ClpS (119 aa).

Residues 1–33 (MATRIPKTPSTPPAQKPAGDDGDSVVLERRPQK) are disordered.

This sequence belongs to the ClpS family. Binds to the N-terminal domain of the chaperone ClpA.

Its function is as follows. Involved in the modulation of the specificity of the ClpAP-mediated ATP-dependent protein degradation. This Variovorax paradoxus (strain S110) protein is ATP-dependent Clp protease adapter protein ClpS.